A 261-amino-acid polypeptide reads, in one-letter code: Cytochrome c oxidase subunit 3 (261 aa).

Over 1 to 15 the chain is Mitochondrial matrix; sequence MTHQTHAYHMVNPSP. Residues 16-34 traverse the membrane as a helical segment; that stretch reads WPLTGALSALLMTSGLIMW. Over 35-40 the chain is Mitochondrial intermembrane; sequence FHFNSM. Residues 41 to 66 traverse the membrane as a helical segment; that stretch reads YLLMLGLTTNTLTMYQWWRDIVREST. Residues 67–72 lie on the Mitochondrial matrix side of the membrane; that stretch reads FQGHHT. The chain crosses the membrane as a helical span at residues 73–105; that stretch reads PIVQKGLRYGMILFIVSEVFFFAGFFWAFYHSS. At 106-128 the chain is on the mitochondrial intermembrane side; the sequence is LAPTPELGGCWPPTGITPLNPME. The chain crosses the membrane as a helical span at residues 129-152; the sequence is VPLLNTSVLLASGVSITWAHHSLM. The Mitochondrial matrix portion of the chain corresponds to 153–155; that stretch reads EGN. A helical membrane pass occupies residues 156–183; it reads RKHMLQALFITISLGVYFTLLQASEYYE. Residues 184-190 lie on the Mitochondrial intermembrane side of the membrane; the sequence is TPFTISD. Residues 191–223 form a helical membrane-spanning segment; that stretch reads GIYGSTFFMATGFHGLHVIIGSTFLIVCFMRQL. Residues 224-232 are Mitochondrial matrix-facing; it reads KFHFTSNHH. Residues 233–256 traverse the membrane as a helical segment; the sequence is FGFEAAAWYWHFVDVVWLFLYVSI. Over 257 to 261 the chain is Mitochondrial intermembrane; that stretch reads YWWGS.

Belongs to the cytochrome c oxidase subunit 3 family. In terms of assembly, component of the cytochrome c oxidase (complex IV, CIV), a multisubunit enzyme composed of 14 subunits. The complex is composed of a catalytic core of 3 subunits MT-CO1, MT-CO2 and MT-CO3, encoded in the mitochondrial DNA, and 11 supernumerary subunits COX4I, COX5A, COX5B, COX6A, COX6B, COX6C, COX7A, COX7B, COX7C, COX8 and NDUFA4, which are encoded in the nuclear genome. The complex exists as a monomer or a dimer and forms supercomplexes (SCs) in the inner mitochondrial membrane with NADH-ubiquinone oxidoreductase (complex I, CI) and ubiquinol-cytochrome c oxidoreductase (cytochrome b-c1 complex, complex III, CIII), resulting in different assemblies (supercomplex SCI(1)III(2)IV(1) and megacomplex MCI(2)III(2)IV(2)).

The protein resides in the mitochondrion inner membrane. The catalysed reaction is 4 Fe(II)-[cytochrome c] + O2 + 8 H(+)(in) = 4 Fe(III)-[cytochrome c] + 2 H2O + 4 H(+)(out). Its function is as follows. Component of the cytochrome c oxidase, the last enzyme in the mitochondrial electron transport chain which drives oxidative phosphorylation. The respiratory chain contains 3 multisubunit complexes succinate dehydrogenase (complex II, CII), ubiquinol-cytochrome c oxidoreductase (cytochrome b-c1 complex, complex III, CIII) and cytochrome c oxidase (complex IV, CIV), that cooperate to transfer electrons derived from NADH and succinate to molecular oxygen, creating an electrochemical gradient over the inner membrane that drives transmembrane transport and the ATP synthase. Cytochrome c oxidase is the component of the respiratory chain that catalyzes the reduction of oxygen to water. Electrons originating from reduced cytochrome c in the intermembrane space (IMS) are transferred via the dinuclear copper A center (CU(A)) of subunit 2 and heme A of subunit 1 to the active site in subunit 1, a binuclear center (BNC) formed by heme A3 and copper B (CU(B)). The BNC reduces molecular oxygen to 2 water molecules using 4 electrons from cytochrome c in the IMS and 4 protons from the mitochondrial matrix. This is Cytochrome c oxidase subunit 3 (MT-CO3) from Halichoerus grypus (Gray seal).